The sequence spans 244 residues: Mediator of RNA polymerase II transcription subunit 9 (244 aa).

The span at 1-10 shows a compositional bias: gly residues; that stretch reads MDQFSGGGGN. Disordered stretches follow at residues 1-28 and 96-131; these read MDQFSGGGGNWSMIPNVQAQGNFGTPTN and QQRLLQSPPLQPQSLQSPPPQQTMVHTPQSMMHTPQ. Over residues 13 to 28 the composition is skewed to polar residues; sequence MIPNVQAQGNFGTPTN. Composition is skewed to low complexity over residues 96 to 111 and 122 to 131; these read QQRLLQSPPLQPQSLQ and TPQSMMHTPQ. Residues 212 to 239 are a coiled coil; that stretch reads KRNVEESEQLLQQRRDLIVEYRKSIEEI.

It belongs to the plant Mediator complex subunit 9 family. Component of the Mediator complex. Interacts with MEE14/CBP1.

The protein localises to the nucleus. Functionally, component of the Mediator complex, a coactivator involved in the regulated transcription of nearly all RNA polymerase II-dependent genes. Mediator functions as a bridge to convey information from gene-specific regulatory proteins to the basal RNA polymerase II transcription machinery. The Mediator complex, having a compact conformation in its free form, is recruited to promoters by direct interactions with regulatory proteins and serves for the assembly of a functional pre-initiation complex with RNA polymerase II and the general transcription factors. The polypeptide is Mediator of RNA polymerase II transcription subunit 9 (MED9) (Arabidopsis thaliana (Mouse-ear cress)).